A 646-amino-acid polypeptide reads, in one-letter code: ATP-dependent zinc metalloprotease FtsH (646 aa).

At 1–4 (MTRS) the chain is on the cytoplasmic side. A helical transmembrane segment spans residues 5 to 25 (LLWQMVIVLGAILMVNYVLTT). The Periplasmic segment spans residues 26 to 120 (LTPQTQEPVV…VRPESKPSPW (95 aa)). Residues 121–141 (ATAMIYMLPWLLIVGVWWFVI) traverse the membrane as a helical segment. Residues 142-646 (KGMRTRQGPG…GELAGGAVEG (505 aa)) are Cytoplasmic-facing. 216–223 (GPPGTGKT) is a binding site for ATP. A Zn(2+)-binding site is contributed by His437. Glu438 is a catalytic residue. Residues His441 and Asp513 each contribute to the Zn(2+) site.

This sequence in the central section; belongs to the AAA ATPase family. In the C-terminal section; belongs to the peptidase M41 family. Homohexamer. It depends on Zn(2+) as a cofactor.

The protein localises to the cell inner membrane. Acts as a processive, ATP-dependent zinc metallopeptidase for both cytoplasmic and membrane proteins. Plays a role in the quality control of integral membrane proteins. This is ATP-dependent zinc metalloprotease FtsH from Syntrophotalea carbinolica (strain DSM 2380 / NBRC 103641 / GraBd1) (Pelobacter carbinolicus).